The primary structure comprises 170 residues: Cathelicidin antimicrobial peptide (170 aa).

The first 30 residues, 1-30, serve as a signal peptide directing secretion; that stretch reads MKTQRDGHSLGWWSLVLLLLGLVMPLAIIA. A propeptide spans 31–131 (cathelin-like domain (CLD)); sequence QVLSYKEAVL…DISCDKDNKR (101 aa). Intrachain disulfides connect cysteine 86–cysteine 97 and cysteine 108–cysteine 125. Residues 150 to 162 form an active core region; that stretch reads SKRIVQRIKDFLR.

The protein belongs to the cathelicidin family. As to quaternary structure, monomer, homodimer or homotrimer (in vitro). Oligomerizes as tetra- or hexamer in solution (in vitro). Proteolytically cleaved by proteinase PRTN3 into antibacterial peptide LL-37. Proteolytically cleaved by cathepsin CTSG and neutrophil elastase ELANE. In terms of processing, resistant to proteolytic degradation in solution, and when bound to both zwitterionic (mimicking mammalian membranes) and negatively charged membranes (mimicking bacterial membranes). Post-translationally, after secretion onto the skin surface, the CAMP gene product is processed by a serine protease-dependent mechanism into multiple novel antimicrobial peptides distinct from and shorter than cathelicidin LL-37. These peptides show enhanced antimicrobial action, acquiring the ability to kill skin pathogens such as S.aureus, E.coli and C.albicans. These peptides have lost the ability to stimulate CXCL8/IL8 release from keratinocytes. The peptides act synergistically, killing bacteria at lower concentrations when present together, and maintain activity at increased salt condition.

It is found in the secreted. The protein resides in the vesicle. Its function is as follows. Antimicrobial protein that is an integral component of the innate immune system. Binds to bacterial lipopolysaccharides (LPS). Acts via neutrophil N-formyl peptide receptors to enhance the release of CXCL2. Postsecretory processing generates multiple cathelicidin antimicrobial peptides with various lengths which act as a topical antimicrobial defense in sweat on skin. The unprocessed precursor form, cathelicidin antimicrobial peptide, inhibits the growth of Gram-negative E.coli and E.aerogenes with efficiencies comparable to that of the mature peptide LL-37 (in vitro). In terms of biological role, antimicrobial peptide that is an integral component of the innate immune system. Binds to bacterial lipopolysaccharides (LPS). Causes membrane permeabilization by forming transmembrane pores (in vitro). Causes lysis of E.coli. Exhibits antimicrobial activity against Gram-negative bacteria such as P.aeruginosa, S.typhimurium, E.aerogenes, E.coli and P.syringae, Gram-positive bacteria such as L.monocytogenes, S.epidermidis, S.pyogenes and S.aureus, as well as vancomycin-resistant enterococci (in vitro). Exhibits antimicrobial activity against methicillin-resistant S.aureus, P.mirabilis, and C.albicans in low-salt media, but not in media containing 100 mM NaCl (in vitro). Forms chiral supramolecular assemblies with quinolone signal (PQS) molecules of P.aeruginosa, which may lead to interference of bacterial quorum signaling and perturbance of bacterial biofilm formation. May form supramolecular fiber-like assemblies on bacterial membranes. Induces cytokine and chemokine producation as well as TNF/TNFA and CSF2/GMCSF production in normal human keratinocytes. Exhibits hemolytic activity against red blood cells. Functionally, exhibits antimicrobial activity against E.coli and B.megaterium (in vitro). This chain is Cathelicidin antimicrobial peptide, found in Gorilla gorilla gorilla (Western lowland gorilla).